The primary structure comprises 1508 residues: Calponin homology domain-containing protein DDB_G0272472 (1508 aa).

6 disordered regions span residues 1 to 165, 197 to 290, 309 to 518, 531 to 561, 680 to 706, and 1036 to 1391; these read MFRN…KNDF, DSEE…NLSP, DFKS…TSIV, AANA…LFND, KEKQ…EKEL, and KIEK…KKSA. Low complexity predominate over residues 81 to 107; that stretch reads SSSPSTSTTTTTKSSSTTTTTTTSSSS. Basic and acidic residues predominate over residues 208-222; that stretch reads PIKKKQSNDLEKNIF. 3 stretches are compositionally biased toward low complexity: residues 234-251, 263-290, and 315-332; these read KQST…QKQP, FGDS…NLSP, and SNNT…KSKP. 2 stretches are compositionally biased toward basic and acidic residues: residues 337–346 and 362–371; these read QKEEIKEVST and VDEKPKERST. Residues 380-391 show a composition bias toward polar residues; it reads KTVTVKSNNSFE. Residues 395–438 show a composition bias toward low complexity; that stretch reads FGSTTTNDDGGDNDFSFTPATTPSSSSSTKATTTSPSSTTTTKS. Residues 439–452 show a composition bias toward polar residues; the sequence is NINIGQKSNKSVDQ. A coiled-coil region spans residues 455–498; the sequence is QFLNDIFQQEEQDKKRREEEAKLKQQQKQKEKEQIKDEIDDLFK. Residues 465-498 are compositionally biased toward basic and acidic residues; sequence EQDKKRREEEAKLKQQQKQKEKEQIKDEIDDLFK. 2 stretches are compositionally biased toward low complexity: residues 500-516 and 531-557; these read SKPT…STTS and AANA…KSTN. Over residues 1036 to 1164 the composition is skewed to basic and acidic residues; sequence KIEKEKEERD…DQEEKEKQLK (129 aa). Low complexity-rich tracts occupy residues 1165 to 1181 and 1189 to 1206; these read EQQQ…TTTT and DSDA…SSHS. Over residues 1216–1225 the composition is skewed to basic residues; sequence SKAKGRKKPT. Positions 1226–1235 are enriched in basic and acidic residues; that stretch reads RRELTKDGNR. Low complexity predominate over residues 1333–1355; sequence PTVTQTTTTTTTPPTTPPSSSVQ. A compositionally biased stretch (polar residues) spans 1362 to 1374; sequence RSFSGSSFMGINS. One can recognise a Calponin-homology (CH) domain in the interval 1397–1504; it reads MKALDVLLQW…YLSEFFKVMK (108 aa).

The polypeptide is Calponin homology domain-containing protein DDB_G0272472 (Dictyostelium discoideum (Social amoeba)).